The primary structure comprises 474 residues: MTVKTRFAPSPTGYLHVGGARTALYSWLYAKNQGGEFVLRIEDTDLERNSQEAVDAILEGMEWLGLEWDEGPYYQTQRFDRYNEMVDKLLAEDKAYKCYASKELLDEIRAEQEANKEMPRYDANHPKIKAANEAAKDGDPCVIRFRNPKEGSVVFEDQIRGRIEIRNDQMDDLIIRRTDGSPTYNFCVVVDDWDMGITHVVRGEDHINNTPRQINIYEALGAPVPTFAHCAMILGDDGAKLSKRHGAVSVMQYRDMGYLPAALNNYLVRLGWSHGDQEIFSQEEMINLFSLNAVSKSASAFNTDKLQWLNNHYIKNSDPAYVAEHLQWHLDQQKLDVTNGPAITDVIKLVGERCHTLVELAEQIRYFYEDFSEFEAGAAKKHLRGVAKEPLEVALAKVEAITEWTTENLHQMIADVCAELEIGMGKIGMPLRVAVTGGGQSPSVDAVMALIGKERCVARIKMALEFIAEREANA.

The 'HIGH' region signature appears at 9 to 19 (PSPTGYLHVGG). The 'KMSKS' region signature appears at 240 to 244 (KLSKR). Lys243 is a binding site for ATP.

Belongs to the class-I aminoacyl-tRNA synthetase family. Glutamate--tRNA ligase type 1 subfamily. In terms of assembly, monomer.

Its subcellular location is the cytoplasm. The enzyme catalyses tRNA(Glu) + L-glutamate + ATP = L-glutamyl-tRNA(Glu) + AMP + diphosphate. Catalyzes the attachment of glutamate to tRNA(Glu) in a two-step reaction: glutamate is first activated by ATP to form Glu-AMP and then transferred to the acceptor end of tRNA(Glu). The protein is Glutamate--tRNA ligase of Vibrio parahaemolyticus serotype O3:K6 (strain RIMD 2210633).